Reading from the N-terminus, the 310-residue chain is Acetyl-coenzyme A carboxylase carboxyl transferase subunit beta, chloroplastic (310 aa).

The 264-residue stretch at 47-310 (LWARCDNCGN…LYLSVPYNKN (264 aa)) folds into the CoA carboxyltransferase N-terminal domain. The Zn(2+) site is built by Cys51, Cys54, Cys70, and Cys73. Residues 51–73 (CDNCGNMLYVKFLKQNRSVCEEC) form a C4-type zinc finger.

The protein belongs to the AccD/PCCB family. As to quaternary structure, acetyl-CoA carboxylase is a heterohexamer composed of biotin carboxyl carrier protein, biotin carboxylase and 2 subunits each of ACCase subunit alpha and ACCase plastid-coded subunit beta (accD). Requires Zn(2+) as cofactor.

The protein resides in the plastid. It localises to the chloroplast stroma. The catalysed reaction is N(6)-carboxybiotinyl-L-lysyl-[protein] + acetyl-CoA = N(6)-biotinyl-L-lysyl-[protein] + malonyl-CoA. Its pathway is lipid metabolism; malonyl-CoA biosynthesis; malonyl-CoA from acetyl-CoA: step 1/1. Functionally, component of the acetyl coenzyme A carboxylase (ACC) complex. Biotin carboxylase (BC) catalyzes the carboxylation of biotin on its carrier protein (BCCP) and then the CO(2) group is transferred by the transcarboxylase to acetyl-CoA to form malonyl-CoA. In Adiantum capillus-veneris (Maidenhair fern), this protein is Acetyl-coenzyme A carboxylase carboxyl transferase subunit beta, chloroplastic.